Reading from the N-terminus, the 931-residue chain is MLLFFTLGLLIHFVFFASIFDIYFTSPLVHGMTPQFTPLPPPARRLVLFVADGLRADALYELDENGNSRAPFIRNIIMHEGSWGISHTRVPTESRPGHVALIAGFYEDVSAVAKGWKENPVEFDSLFNESKYTWSWGSPDILPMFAKGASGDHVYTYSYDAKREDFGAQDATKLDTWVFDNVKDFFHHARNNQSLFSKINEEKIVFFLHLLGIDTNGHAHRPSSRDYKHNIKKVDDGVKEIVSMFNHFYGNDGKTTFIFTSDHGMTDWGSHGAGHPSETLTPLVTWGAGIKYPQRVSAQQFDDAFLKEWRLENWKRLDVNQADIAPLMTSLIGVPFPLNSVGILPVDYLNNTDLFKAESMFTNAVQILEQFKVKMTQKKEVTLPFLFTPFKLLSDSKQFNILRKARSYIKHRKFDEVVSLCKELIHLALKGLSYYHTYDRFFLGVNVVIGFVGWISYASLLIIKSHSNLIKGVSKEVKKPSHLLPCSFVAIGILVAFFLLIQACPWTYYVYGLLPLPIWYAVLREFQVIQDLVVSVLTYPLSHFVGYLLAFTLGIEVLVLSFFYRYMLTAGLTAFAAWPFLTRLWTRAKMTSLSWTFFSLLLAVFPLMPVVGRKPDISLVMGAGLLVLLLSLCVVTSLMKRKDSFIKEELLVHLLQVLSTVLSMYVVYSTQSSLLRKQGLPLMNQIISWATLASSLVVPLLSSPVLFQRLFSILLSLMSTYLLLSTGYEALFPLVLSCLMFVWINIEQETLQQSGVCCKQKLTSIQFSYNTDITQFRQLYLDDIRRAFFLVFFLVTAFFGTGNIASINSFDLASVYCFLTVFSPFMMGALMMWKILIPFVLVMCAFEAVQLTTQLSSKSLFLIVLVISDIMALHFFFLVKDYGSWLDIGTSISHYVIVMSMTIFLVFLNGLAQLLTTKKLRLCGKPKSHFM.

Residue M1 is a topological domain, cytoplasmic. The chain crosses the membrane as a helical span at residues 2-24; the sequence is LLFFTLGLLIHFVFFASIFDIYF. Residues 25–442 are Lumenal-facing; it reads TSPLVHGMTP…SYYHTYDRFF (418 aa). Residues N128, N192, and N350 are each glycosylated (N-linked (GlcNAc...) asparagine). The chain crosses the membrane as a helical span at residues 443–463; sequence LGVNVVIGFVGWISYASLLII. The Cytoplasmic portion of the chain corresponds to 464-482; the sequence is KSHSNLIKGVSKEVKKPSH. A helical membrane pass occupies residues 483 to 503; the sequence is LLPCSFVAIGILVAFFLLIQA. Topologically, residues 504–508 are lumenal; sequence CPWTY. The chain crosses the membrane as a helical span at residues 509–529; sequence YVYGLLPLPIWYAVLREFQVI. Residues 530-543 are Cytoplasmic-facing; the sequence is QDLVVSVLTYPLSH. The helical transmembrane segment at 544 to 564 threads the bilayer; sequence FVGYLLAFTLGIEVLVLSFFY. Position 565 (R565) is a topological domain, lumenal. The chain crosses the membrane as a helical span at residues 566 to 586; it reads YMLTAGLTAFAAWPFLTRLWT. Topologically, residues 587–591 are cytoplasmic; it reads RAKMT. A helical membrane pass occupies residues 592–612; it reads SLSWTFFSLLLAVFPLMPVVG. Residues 613 to 618 are Lumenal-facing; the sequence is RKPDIS. A helical membrane pass occupies residues 619–639; it reads LVMGAGLLVLLLSLCVVTSLM. At 640–649 the chain is on the cytoplasmic side; the sequence is KRKDSFIKEE. Residues 650–670 traverse the membrane as a helical segment; the sequence is LLVHLLQVLSTVLSMYVVYST. Over 671–685 the chain is Lumenal; the sequence is QSSLLRKQGLPLMNQ. The helical transmembrane segment at 686 to 706 threads the bilayer; the sequence is IISWATLASSLVVPLLSSPVL. Topologically, residues 707–723 are cytoplasmic; it reads FQRLFSILLSLMSTYLL. A helical membrane pass occupies residues 724-744; sequence LSTGYEALFPLVLSCLMFVWI. The Lumenal segment spans residues 745 to 786; the sequence is NIEQETLQQSGVCCKQKLTSIQFSYNTDITQFRQLYLDDIRR. The chain crosses the membrane as a helical span at residues 787–807; it reads AFFLVFFLVTAFFGTGNIASI. Over 808-824 the chain is Cytoplasmic; the sequence is NSFDLASVYCFLTVFSP. A helical transmembrane segment spans residues 825 to 845; that stretch reads FMMGALMMWKILIPFVLVMCA. Over 846 to 858 the chain is Lumenal; sequence FEAVQLTTQLSSK. Residues 859-879 traverse the membrane as a helical segment; that stretch reads SLFLIVLVISDIMALHFFFLV. Residues 880 to 894 are Cytoplasmic-facing; that stretch reads KDYGSWLDIGTSISH. Residues 895–915 traverse the membrane as a helical segment; that stretch reads YVIVMSMTIFLVFLNGLAQLL. The Lumenal segment spans residues 916–931; the sequence is TTKKLRLCGKPKSHFM.

This sequence belongs to the PIGG/PIGN/PIGO family. PIGN subfamily.

The protein resides in the endoplasmic reticulum membrane. It functions in the pathway glycolipid biosynthesis; glycosylphosphatidylinositol-anchor biosynthesis. Functionally, ethanolamine phosphate transferase that catalyzes an ethanolamine phosphate (EtNP) transfer from phosphatidylethanolamine (PE) to the 2-OH position of the first alpha-1,4-linked mannose of the alpha-D-Man-(1-&gt;6)-alpha-D-Man-(1-&gt;4)-alpha-D-GlcN-(1-&gt;6)-(1-radyl,2-acyl-sn-glycero-3-phospho)-2-acyl-inositol (also termed H3) intermediate to generate an alpha-D-Man-(1-&gt;6)-2-PEtn-alpha-D-Man-(1-&gt;4)-alpha-D-GlcN-(1-&gt;6)-(1-radyl,2-acyl-sn-glycero-3-phospho)-2-acyl-inositol and participates in the eighth step of the glycosylphosphatidylinositol-anchor biosynthesis. May act as suppressor of replication stress and chromosome missegregation. The sequence is that of GPI ethanolamine phosphate transferase 1 from Homo sapiens (Human).